The primary structure comprises 459 residues: Cysteine--tRNA ligase (459 aa).

Cys28 lines the Zn(2+) pocket. A 'HIGH' region motif is present at residues 30–40 (VTVYDLCHFGH). Positions 209, 234, and 238 each coordinate Zn(2+). The 'KMSKS' region signature appears at 266 to 270 (KMSKS). Lys269 contacts ATP.

The protein belongs to the class-I aminoacyl-tRNA synthetase family. In terms of assembly, monomer. Zn(2+) is required as a cofactor.

Its subcellular location is the cytoplasm. It carries out the reaction tRNA(Cys) + L-cysteine + ATP = L-cysteinyl-tRNA(Cys) + AMP + diphosphate. In Actinobacillus pleuropneumoniae serotype 3 (strain JL03), this protein is Cysteine--tRNA ligase.